We begin with the raw amino-acid sequence, 171 residues long: Inosine/xanthosine triphosphatase (171 aa).

Position 8–13 (8–13 (TTNPAK)) interacts with substrate. The Mg(2+) site is built by D38 and Q68.

This sequence belongs to the YjjX NTPase family. As to quaternary structure, homodimer. The cofactor is Mg(2+). Mn(2+) serves as cofactor.

It carries out the reaction XTP + H2O = XDP + phosphate + H(+). The enzyme catalyses ITP + H2O = IDP + phosphate + H(+). Functionally, phosphatase that hydrolyzes non-canonical purine nucleotides such as XTP and ITP to their respective diphosphate derivatives. Probably excludes non-canonical purines from DNA/RNA precursor pool, thus preventing their incorporation into DNA/RNA and avoiding chromosomal lesions. This chain is Inosine/xanthosine triphosphatase, found in Cronobacter sakazakii (strain ATCC BAA-894) (Enterobacter sakazakii).